The following is a 316-amino-acid chain: 4-hydroxyphenylacetate decarboxylase activating enzyme (316 aa).

The 288-residue stretch at 20 to 307 (HDGPGCRTTV…QDIFLDNGIA (288 aa)) folds into the Radical SAM core domain. Cys34, Cys38, Cys41, Cys60, Cys66, Cys69, and Cys105 together coordinate [4Fe-4S] cluster. 40 to 42 (WCA) lines the S-adenosyl-L-methionine pocket. The 32-residue stretch at 84 to 115 (NKPVIDWNICKDCESFECVNSCYYNAFKLCAK) folds into the 4Fe-4S ferredoxin-type domain. S-adenosyl-L-methionine contacts are provided by residues Gly144, 193-195 (DIK), and His267.

The protein belongs to the organic radical-activating enzymes family. In terms of assembly, monomer. The cofactor is [4Fe-4S] cluster.

The catalysed reaction is glycyl-[protein] + reduced [flavodoxin] + S-adenosyl-L-methionine = glycin-2-yl radical-[protein] + semiquinone [flavodoxin] + 5'-deoxyadenosine + L-methionine + H(+). In terms of biological role, catalyzes activation of 4-hydroxyphenylacetate decarboxylase under anaerobic conditions by generation of an organic free radical on a glycine residue, via a homolytic cleavage of S-adenosyl-L-methionine (SAM). This chain is 4-hydroxyphenylacetate decarboxylase activating enzyme, found in Clostridioides difficile (strain 630) (Peptoclostridium difficile).